The sequence spans 101 residues: Small ribosomal subunit protein uS10 (101 aa).

The protein belongs to the universal ribosomal protein uS10 family. As to quaternary structure, part of the 30S ribosomal subunit.

In terms of biological role, involved in the binding of tRNA to the ribosomes. This is Small ribosomal subunit protein uS10 from Corynebacterium urealyticum (strain ATCC 43042 / DSM 7109).